A 120-amino-acid polypeptide reads, in one-letter code: MKLTRRESKQRRHRRVRGKVQGSPERPRLAVFRSNEHIYAQVIDDTQHHTLVSASTVEPEVKSSLASGANCEASSQIGKLIAVRSLEKGITKVVFDRGGNLYHGRIKALAEAAREAGLDF.

The interval 1 to 26 is disordered; sequence MKLTRRESKQRRHRRVRGKVQGSPER. Over residues 8–18 the composition is skewed to basic residues; sequence SKQRRHRRVRG.

The protein belongs to the universal ribosomal protein uL18 family. In terms of assembly, part of the 50S ribosomal subunit; part of the 5S rRNA/L5/L18/L25 subcomplex. Contacts the 5S and 23S rRNAs.

Functionally, this is one of the proteins that bind and probably mediate the attachment of the 5S RNA into the large ribosomal subunit, where it forms part of the central protuberance. This chain is Large ribosomal subunit protein uL18, found in Trichormus variabilis (strain ATCC 29413 / PCC 7937) (Anabaena variabilis).